Reading from the N-terminus, the 117-residue chain is MAHLTQFEKRRQRVRTALRQRAAGRPRLSVHRSGRHIYAQLIDDAAGTTLAAASTLDKDVRGKTGATTAAAADVGKRLAAAAKKAGVTQVVFDRGGFLFHGRIKALADAAREGGLEF.

It belongs to the universal ribosomal protein uL18 family. As to quaternary structure, part of the 50S ribosomal subunit; part of the 5S rRNA/L5/L18/L25 subcomplex. Contacts the 5S and 23S rRNAs.

Its function is as follows. This is one of the proteins that bind and probably mediate the attachment of the 5S RNA into the large ribosomal subunit, where it forms part of the central protuberance. The polypeptide is Large ribosomal subunit protein uL18 (Sphingopyxis alaskensis (strain DSM 13593 / LMG 18877 / RB2256) (Sphingomonas alaskensis)).